The following is a 539-amino-acid chain: F-box/WD-40 repeat-containing protein At5g21040 (539 aa).

The 47-residue stretch at 65-111 (STTIIDLPQALISEILNCLDPKELGLVSCVSTYLHRLASEHHAWKEF) folds into the F-box domain. 7 WD repeats span residues 160 to 199 (GHTE…SIAA), 201 to 239 (KPLG…RNLF), 255 to 292 (GHEG…CVKT), 294 to 330 (RHSD…PLAI), 334 to 373 (AHEG…SETS), 382 to 419 (PHTS…KTNR), and 433 to 477 (PPQR…EIER). The interval 505–539 (GRPDQCSIAAHKNPINGERNRAWHSKRRASGKAKA) is disordered. Residues 526-539 (AWHSKRRASGKAKA) are compositionally biased toward basic residues.

In Arabidopsis thaliana (Mouse-ear cress), this protein is F-box/WD-40 repeat-containing protein At5g21040.